A 326-amino-acid polypeptide reads, in one-letter code: Malate dehydrogenase (326 aa).

NAD(+) is bound at residue 11-17 (GAAGQIG). Substrate contacts are provided by Arg-92 and Arg-98. NAD(+)-binding positions include Asn-105, Gln-112, and 129 to 131 (VGN). Substrate contacts are provided by Asn-131 and Arg-162. Residue His-187 is the Proton acceptor of the active site.

Belongs to the LDH/MDH superfamily. MDH type 2 family.

It catalyses the reaction (S)-malate + NAD(+) = oxaloacetate + NADH + H(+). Its function is as follows. Catalyzes the reversible oxidation of malate to oxaloacetate. The chain is Malate dehydrogenase from Halorhodospira halophila (strain DSM 244 / SL1) (Ectothiorhodospira halophila (strain DSM 244 / SL1)).